The primary structure comprises 144 residues: Large ribosomal subunit protein uL16 (144 aa).

It belongs to the universal ribosomal protein uL16 family. As to quaternary structure, part of the 50S ribosomal subunit.

In terms of biological role, binds 23S rRNA and is also seen to make contacts with the A and possibly P site tRNAs. The protein is Large ribosomal subunit protein uL16 of Oceanobacillus iheyensis (strain DSM 14371 / CIP 107618 / JCM 11309 / KCTC 3954 / HTE831).